The chain runs to 200 residues: HVA22-like protein k (200 aa).

The interval Leu-176 to Asp-200 is disordered.

The protein belongs to the DP1 family.

The sequence is that of HVA22-like protein k (HVA22K) from Arabidopsis thaliana (Mouse-ear cress).